Here is a 115-residue protein sequence, read N- to C-terminus: Nucleoid-associated protein Pro_0020 (115 aa).

Belongs to the YbaB/EbfC family. In terms of assembly, homodimer.

The protein resides in the cytoplasm. The protein localises to the nucleoid. In terms of biological role, binds to DNA and alters its conformation. May be involved in regulation of gene expression, nucleoid organization and DNA protection. This Prochlorococcus marinus (strain SARG / CCMP1375 / SS120) protein is Nucleoid-associated protein Pro_0020.